A 210-amino-acid polypeptide reads, in one-letter code: MVNCVVRNWQGEDAGQAELDLKVANEENAAHIVHRALRRQMNNARQGTASSKTRSEVRGGGRKPWRQKGTGRARAGSSRSPLWRGGGVIFGPKPRSYSTKMNRKERRLALRTAFASRAEDLVVVEDFGDNLSRPKTKDLLEAMGRWGVNADSKTLLILADKHDTIYLSARNVEKLKLILASNLNVYDLLAADQIVATQSAIAKIQEVYSD.

Positions 41–52 (MNNARQGTASSK) are enriched in polar residues. The disordered stretch occupies residues 41–80 (MNNARQGTASSKTRSEVRGGGRKPWRQKGTGRARAGSSRS). The segment covering 60–71 (GGRKPWRQKGTG) has biased composition (basic residues).

Belongs to the universal ribosomal protein uL4 family. As to quaternary structure, part of the 50S ribosomal subunit.

Its function is as follows. One of the primary rRNA binding proteins, this protein initially binds near the 5'-end of the 23S rRNA. It is important during the early stages of 50S assembly. It makes multiple contacts with different domains of the 23S rRNA in the assembled 50S subunit and ribosome. Forms part of the polypeptide exit tunnel. This Acaryochloris marina (strain MBIC 11017) protein is Large ribosomal subunit protein uL4.